A 564-amino-acid chain; its full sequence is Phosphomethylpyrimidine synthase (564 aa).

Residues Asn203, Met232, Tyr261, His297, 317–319, 358–361, and Glu397 contribute to the substrate site; these read SRG and DGLR. His401 serves as a coordination point for Zn(2+). A substrate-binding site is contributed by Tyr424. Zn(2+) is bound at residue His465. Residues Cys541, Cys544, and Cys549 each coordinate [4Fe-4S] cluster.

Belongs to the ThiC family. [4Fe-4S] cluster serves as cofactor.

It carries out the reaction 5-amino-1-(5-phospho-beta-D-ribosyl)imidazole + S-adenosyl-L-methionine = 4-amino-2-methyl-5-(phosphooxymethyl)pyrimidine + CO + 5'-deoxyadenosine + formate + L-methionine + 3 H(+). The protein operates within cofactor biosynthesis; thiamine diphosphate biosynthesis. Functionally, catalyzes the synthesis of the hydroxymethylpyrimidine phosphate (HMP-P) moiety of thiamine from aminoimidazole ribotide (AIR) in a radical S-adenosyl-L-methionine (SAM)-dependent reaction. The sequence is that of Phosphomethylpyrimidine synthase from Bacteroides fragilis (strain ATCC 25285 / DSM 2151 / CCUG 4856 / JCM 11019 / LMG 10263 / NCTC 9343 / Onslow / VPI 2553 / EN-2).